The chain runs to 73 residues: DNA-directed RNA polymerase subunit epsilon (73 aa).

Belongs to the RNA polymerase subunit epsilon family. As to quaternary structure, RNAP is composed of a core of 2 alpha, a beta and a beta' subunit. The core is associated with a delta subunit, and at least one of epsilon or omega. When a sigma factor is associated with the core the holoenzyme is formed, which can initiate transcription.

It carries out the reaction RNA(n) + a ribonucleoside 5'-triphosphate = RNA(n+1) + diphosphate. A non-essential component of RNA polymerase (RNAP). The polypeptide is DNA-directed RNA polymerase subunit epsilon (Lactobacillus acidophilus (strain ATCC 700396 / NCK56 / N2 / NCFM)).